Consider the following 217-residue polypeptide: GTP cyclohydrolase 1 (217 aa).

Zn(2+) contacts are provided by Cys-108, His-111, and Cys-179.

The protein belongs to the GTP cyclohydrolase I family. Toroid-shaped homodecamer, composed of two pentamers of five dimers.

It catalyses the reaction GTP + H2O = 7,8-dihydroneopterin 3'-triphosphate + formate + H(+). It participates in cofactor biosynthesis; 7,8-dihydroneopterin triphosphate biosynthesis; 7,8-dihydroneopterin triphosphate from GTP: step 1/1. The chain is GTP cyclohydrolase 1 from Shewanella denitrificans (strain OS217 / ATCC BAA-1090 / DSM 15013).